A 367-amino-acid polypeptide reads, in one-letter code: UDP-N-acetylglucosamine--N-acetylmuramyl-(pentapeptide) pyrophosphoryl-undecaprenol N-acetylglucosamine transferase (367 aa).

UDP-N-acetyl-alpha-D-glucosamine is bound by residues 15 to 17 (TGG), asparagine 126, arginine 169, serine 197, and glutamine 298.

It belongs to the glycosyltransferase 28 family. MurG subfamily.

Its subcellular location is the cell inner membrane. It catalyses the reaction di-trans,octa-cis-undecaprenyl diphospho-N-acetyl-alpha-D-muramoyl-L-alanyl-D-glutamyl-meso-2,6-diaminopimeloyl-D-alanyl-D-alanine + UDP-N-acetyl-alpha-D-glucosamine = di-trans,octa-cis-undecaprenyl diphospho-[N-acetyl-alpha-D-glucosaminyl-(1-&gt;4)]-N-acetyl-alpha-D-muramoyl-L-alanyl-D-glutamyl-meso-2,6-diaminopimeloyl-D-alanyl-D-alanine + UDP + H(+). It functions in the pathway cell wall biogenesis; peptidoglycan biosynthesis. Functionally, cell wall formation. Catalyzes the transfer of a GlcNAc subunit on undecaprenyl-pyrophosphoryl-MurNAc-pentapeptide (lipid intermediate I) to form undecaprenyl-pyrophosphoryl-MurNAc-(pentapeptide)GlcNAc (lipid intermediate II). The chain is UDP-N-acetylglucosamine--N-acetylmuramyl-(pentapeptide) pyrophosphoryl-undecaprenol N-acetylglucosamine transferase from Bradyrhizobium sp. (strain ORS 278).